A 597-amino-acid chain; its full sequence is Adenine deaminase 2 (597 aa).

Belongs to the metallo-dependent hydrolases superfamily. Adenine deaminase family. Mn(2+) is required as a cofactor.

It carries out the reaction adenine + H2O + H(+) = hypoxanthine + NH4(+). In Agrobacterium fabrum (strain C58 / ATCC 33970) (Agrobacterium tumefaciens (strain C58)), this protein is Adenine deaminase 2.